A 240-amino-acid chain; its full sequence is Small ribosomal subunit protein uS2 (240 aa).

This sequence belongs to the universal ribosomal protein uS2 family.

The protein is Small ribosomal subunit protein uS2 (rpsB) of Pasteurella multocida (strain Pm70).